Here is a 95-residue protein sequence, read N- to C-terminus: Cytochrome b (95 aa).

Helical transmembrane passes span 1–16 (GLCL…FLAM), 40–61 (WLIR…YLHI), and 76–95 (WNIG…VGYV). 2 residues coordinate heme b: His-46 and His-60.

This sequence belongs to the cytochrome b family. As to quaternary structure, the cytochrome bc1 complex contains 3 respiratory subunits (MT-CYB, CYC1 and UQCRFS1), 2 core proteins (UQCRC1 and UQCRC2) and probably 6 low-molecular weight proteins. The cofactor is heme b.

Its subcellular location is the mitochondrion inner membrane. Its function is as follows. Component of the ubiquinol-cytochrome c reductase complex (complex III or cytochrome b-c1 complex) that is part of the mitochondrial respiratory chain. The b-c1 complex mediates electron transfer from ubiquinol to cytochrome c. Contributes to the generation of a proton gradient across the mitochondrial membrane that is then used for ATP synthesis. The chain is Cytochrome b (mt-cyb) from Gomphosus varius (Bird wrasse).